Here is a 208-residue protein sequence, read N- to C-terminus: LexA repressor (208 aa).

The segment at residues 30–50 (VREICAAVGLSSTSTVHGHLS) is a DNA-binding region (H-T-H motif). Residues Ser-129 and Lys-167 each act as for autocatalytic cleavage activity in the active site.

It belongs to the peptidase S24 family. As to quaternary structure, homodimer.

It carries out the reaction Hydrolysis of Ala-|-Gly bond in repressor LexA.. Its function is as follows. Represses a number of genes involved in the response to DNA damage (SOS response), including recA and lexA. In the presence of single-stranded DNA, RecA interacts with LexA causing an autocatalytic cleavage which disrupts the DNA-binding part of LexA, leading to derepression of the SOS regulon and eventually DNA repair. In Lactobacillus acidophilus (strain ATCC 700396 / NCK56 / N2 / NCFM), this protein is LexA repressor.